The chain runs to 365 residues: Aminomethyltransferase (365 aa).

It belongs to the GcvT family. In terms of assembly, the glycine cleavage system is composed of four proteins: P, T, L and H.

It catalyses the reaction N(6)-[(R)-S(8)-aminomethyldihydrolipoyl]-L-lysyl-[protein] + (6S)-5,6,7,8-tetrahydrofolate = N(6)-[(R)-dihydrolipoyl]-L-lysyl-[protein] + (6R)-5,10-methylene-5,6,7,8-tetrahydrofolate + NH4(+). Its function is as follows. The glycine cleavage system catalyzes the degradation of glycine. This is Aminomethyltransferase from Bacillus pumilus (strain SAFR-032).